The sequence spans 400 residues: Enoyl-[acyl-carrier-protein] reductase [NADH] (400 aa).

Residues 48–53, 74–75, 111–112, and 139–140 contribute to the NAD(+) site; these read GSSSGY, FE, DA, and LA. Tyr225 is a substrate binding site. Tyr235 acts as the Proton donor in catalysis. NAD(+)-binding positions include Lys244 and 273–275; that span reads VVT.

The protein belongs to the TER reductase family. In terms of assembly, monomer.

It catalyses the reaction a 2,3-saturated acyl-[ACP] + NAD(+) = a (2E)-enoyl-[ACP] + NADH + H(+). It participates in lipid metabolism; fatty acid biosynthesis. Involved in the final reduction of the elongation cycle of fatty acid synthesis (FAS II). Catalyzes the reduction of a carbon-carbon double bond in an enoyl moiety that is covalently linked to an acyl carrier protein (ACP). In Shewanella loihica (strain ATCC BAA-1088 / PV-4), this protein is Enoyl-[acyl-carrier-protein] reductase [NADH].